The chain runs to 150 residues: Large ribosomal subunit protein uL15 (150 aa).

Positions 1 to 52 are disordered; that stretch reads MDLSNLKPAEGSVRKNSKRIGRGEGSGKGGTATRGHKGAKSRSGYSKKIGFE. Over residues 23-32 the composition is skewed to gly residues; the sequence is GEGSGKGGTA.

It belongs to the universal ribosomal protein uL15 family. As to quaternary structure, part of the 50S ribosomal subunit.

Functionally, binds to the 23S rRNA. This Christiangramia forsetii (strain DSM 17595 / CGMCC 1.15422 / KT0803) (Gramella forsetii) protein is Large ribosomal subunit protein uL15.